A 273-amino-acid polypeptide reads, in one-letter code: 4-hydroxy-tetrahydrodipicolinate reductase (273 aa).

Residues 12–17 (GAGGRM) and glutamate 38 contribute to the NAD(+) site. Residue arginine 39 participates in NADP(+) binding. Residues 102-104 (GTT) and 126-129 (AANF) contribute to the NAD(+) site. Histidine 159 acts as the Proton donor/acceptor in catalysis. Histidine 160 provides a ligand contact to (S)-2,3,4,5-tetrahydrodipicolinate. Catalysis depends on lysine 163, which acts as the Proton donor. 169–170 (GT) is a (S)-2,3,4,5-tetrahydrodipicolinate binding site.

Belongs to the DapB family. In terms of assembly, homotetramer.

The protein localises to the cytoplasm. The enzyme catalyses (S)-2,3,4,5-tetrahydrodipicolinate + NAD(+) + H2O = (2S,4S)-4-hydroxy-2,3,4,5-tetrahydrodipicolinate + NADH + H(+). It catalyses the reaction (S)-2,3,4,5-tetrahydrodipicolinate + NADP(+) + H2O = (2S,4S)-4-hydroxy-2,3,4,5-tetrahydrodipicolinate + NADPH + H(+). Its pathway is amino-acid biosynthesis; L-lysine biosynthesis via DAP pathway; (S)-tetrahydrodipicolinate from L-aspartate: step 4/4. Functionally, catalyzes the conversion of 4-hydroxy-tetrahydrodipicolinate (HTPA) to tetrahydrodipicolinate. The sequence is that of 4-hydroxy-tetrahydrodipicolinate reductase from Shigella sonnei (strain Ss046).